The chain runs to 236 residues: 7-cyano-7-deazaguanine synthase (236 aa).

ATP is bound at residue Leu-21–Leu-31. Positions 202, 212, 215, and 218 each coordinate Zn(2+).

It belongs to the QueC family. Zn(2+) serves as cofactor.

The catalysed reaction is 7-carboxy-7-deazaguanine + NH4(+) + ATP = 7-cyano-7-deazaguanine + ADP + phosphate + H2O + H(+). It functions in the pathway purine metabolism; 7-cyano-7-deazaguanine biosynthesis. Functionally, catalyzes the ATP-dependent conversion of 7-carboxy-7-deazaguanine (CDG) to 7-cyano-7-deazaguanine (preQ(0)). In Frankia casuarinae (strain DSM 45818 / CECT 9043 / HFP020203 / CcI3), this protein is 7-cyano-7-deazaguanine synthase.